Here is a 116-residue protein sequence, read N- to C-terminus: Large ribosomal subunit protein uL18 (116 aa).

Belongs to the universal ribosomal protein uL18 family. In terms of assembly, part of the 50S ribosomal subunit; part of the 5S rRNA/L5/L18/L25 subcomplex. Contacts the 5S and 23S rRNAs.

This is one of the proteins that bind and probably mediate the attachment of the 5S RNA into the large ribosomal subunit, where it forms part of the central protuberance. This is Large ribosomal subunit protein uL18 from Pseudoalteromonas translucida (strain TAC 125).